A 206-amino-acid polypeptide reads, in one-letter code: Histidine biosynthesis bifunctional protein HisIE (206 aa).

The segment at methionine 1 to phenylalanine 117 is phosphoribosyl-AMP cyclohydrolase. A phosphoribosyl-ATP pyrophosphohydrolase region spans residues leucine 118–arginine 206.

This sequence in the N-terminal section; belongs to the PRA-CH family. It in the C-terminal section; belongs to the PRA-PH family.

The protein resides in the cytoplasm. The enzyme catalyses 1-(5-phospho-beta-D-ribosyl)-ATP + H2O = 1-(5-phospho-beta-D-ribosyl)-5'-AMP + diphosphate + H(+). It carries out the reaction 1-(5-phospho-beta-D-ribosyl)-5'-AMP + H2O = 1-(5-phospho-beta-D-ribosyl)-5-[(5-phospho-beta-D-ribosylamino)methylideneamino]imidazole-4-carboxamide. Its pathway is amino-acid biosynthesis; L-histidine biosynthesis; L-histidine from 5-phospho-alpha-D-ribose 1-diphosphate: step 2/9. It participates in amino-acid biosynthesis; L-histidine biosynthesis; L-histidine from 5-phospho-alpha-D-ribose 1-diphosphate: step 3/9. The polypeptide is Histidine biosynthesis bifunctional protein HisIE (hisI) (Xylella fastidiosa (strain Temecula1 / ATCC 700964)).